A 406-amino-acid chain; its full sequence is Cysteine desulfurase (406 aa).

Lys226 is subject to N6-(pyridoxal phosphate)lysine. The active-site Cysteine persulfide intermediate is Cys364.

It belongs to the class-V pyridoxal-phosphate-dependent aminotransferase family. Csd subfamily. As to quaternary structure, homodimer. Interacts with SufE and the SufBCD complex composed of SufB, SufC and SufD. The interaction with SufE is required to mediate the direct transfer of the sulfur atom from the S-sulfanylcysteine. Pyridoxal 5'-phosphate serves as cofactor.

The protein localises to the cytoplasm. The catalysed reaction is (sulfur carrier)-H + L-cysteine = (sulfur carrier)-SH + L-alanine. It carries out the reaction L-selenocysteine + AH2 = hydrogenselenide + L-alanine + A + H(+). The protein operates within cofactor biosynthesis; iron-sulfur cluster biosynthesis. Its function is as follows. Cysteine desulfurases mobilize the sulfur from L-cysteine to yield L-alanine, an essential step in sulfur metabolism for biosynthesis of a variety of sulfur-containing biomolecules. Component of the suf operon, which is activated and required under specific conditions such as oxidative stress and iron limitation. Acts as a potent selenocysteine lyase in vitro, that mobilizes selenium from L-selenocysteine. Selenocysteine lyase activity is however unsure in vivo. This chain is Cysteine desulfurase, found in Salmonella dublin (strain CT_02021853).